Consider the following 71-residue polypeptide: Large ribosomal subunit protein bL31 (71 aa).

Residues C16, C18, C37, and C40 each coordinate Zn(2+).

The protein belongs to the bacterial ribosomal protein bL31 family. Type A subfamily. Part of the 50S ribosomal subunit. The cofactor is Zn(2+).

Functionally, binds the 23S rRNA. The chain is Large ribosomal subunit protein bL31 from Pectobacterium atrosepticum (strain SCRI 1043 / ATCC BAA-672) (Erwinia carotovora subsp. atroseptica).